The following is an 87-amino-acid chain: Small ribosomal subunit protein uS17 (87 aa).

The protein belongs to the universal ribosomal protein uS17 family. Part of the 30S ribosomal subunit.

In terms of biological role, one of the primary rRNA binding proteins, it binds specifically to the 5'-end of 16S ribosomal RNA. This Hydrogenovibrio crunogenus (strain DSM 25203 / XCL-2) (Thiomicrospira crunogena) protein is Small ribosomal subunit protein uS17.